Reading from the N-terminus, the 458-residue chain is Argininosuccinate lyase (458 aa).

This sequence belongs to the lyase 1 family. Argininosuccinate lyase subfamily.

It is found in the cytoplasm. It catalyses the reaction 2-(N(omega)-L-arginino)succinate = fumarate + L-arginine. The protein operates within amino-acid biosynthesis; L-arginine biosynthesis; L-arginine from L-ornithine and carbamoyl phosphate: step 3/3. This chain is Argininosuccinate lyase, found in Neisseria meningitidis serogroup A / serotype 4A (strain DSM 15465 / Z2491).